A 313-amino-acid chain; its full sequence is Ribosomal protein L11 methyltransferase (313 aa).

Positions 164, 185, 207, and 249 each coordinate S-adenosyl-L-methionine.

Belongs to the methyltransferase superfamily. PrmA family.

It is found in the cytoplasm. The enzyme catalyses L-lysyl-[protein] + 3 S-adenosyl-L-methionine = N(6),N(6),N(6)-trimethyl-L-lysyl-[protein] + 3 S-adenosyl-L-homocysteine + 3 H(+). In terms of biological role, methylates ribosomal protein L11. The chain is Ribosomal protein L11 methyltransferase from Clostridium perfringens (strain ATCC 13124 / DSM 756 / JCM 1290 / NCIMB 6125 / NCTC 8237 / Type A).